The sequence spans 251 residues: Hydroxyacylglutathione hydrolase (251 aa).

Positions 53, 55, 57, 58, 110, 127, and 165 each coordinate Zn(2+).

It belongs to the metallo-beta-lactamase superfamily. Glyoxalase II family. Monomer. Requires Zn(2+) as cofactor.

The catalysed reaction is an S-(2-hydroxyacyl)glutathione + H2O = a 2-hydroxy carboxylate + glutathione + H(+). It participates in secondary metabolite metabolism; methylglyoxal degradation; (R)-lactate from methylglyoxal: step 2/2. Thiolesterase that catalyzes the hydrolysis of S-D-lactoyl-glutathione to form glutathione and D-lactic acid. The sequence is that of Hydroxyacylglutathione hydrolase from Yersinia pestis.